The following is a 65-amino-acid chain: Large ribosomal subunit protein bL33c (65 aa).

It belongs to the bacterial ribosomal protein bL33 family.

The protein resides in the plastid. It localises to the chloroplast. In Chara vulgaris (Common stonewort), this protein is Large ribosomal subunit protein bL33c.